Reading from the N-terminus, the 593-residue chain is UvrABC system protein C (593 aa).

One can recognise a GIY-YIG domain in the interval 17–94; that stretch reads MEPGCYLMKD…IKQYQPRYNI (78 aa). In terms of domain architecture, UVR spans 199-234; the sequence is KTILKSLEERMLTASESLDFERAKEYRDLIQHIQNL.

Belongs to the UvrC family. Interacts with UvrB in an incision complex.

It localises to the cytoplasm. The UvrABC repair system catalyzes the recognition and processing of DNA lesions. UvrC both incises the 5' and 3' sides of the lesion. The N-terminal half is responsible for the 3' incision and the C-terminal half is responsible for the 5' incision. This is UvrABC system protein C from Staphylococcus aureus (strain MRSA252).